Consider the following 336-residue polypeptide: UDP-glucose 4-epimerase (336 aa).

NAD(+)-binding positions include 11 to 12 (YI), 31 to 36 (DNLINS), 58 to 59 (DI), 80 to 84 (FAGLK), Asn99, Ser124, Tyr149, Lys153, and Phe178. The substrate site is built by Ser124 and Tyr149. Tyr149 acts as the Proton acceptor in catalysis. Residues Asn179, 199-200 (NL), 216-218 (LVY), Arg231, and 290-293 (RPGD) each bind substrate.

This sequence belongs to the NAD(P)-dependent epimerase/dehydratase family. Homodimer. It depends on NAD(+) as a cofactor.

It catalyses the reaction UDP-alpha-D-glucose = UDP-alpha-D-galactose. It participates in carbohydrate metabolism; galactose metabolism. In terms of biological role, involved in the metabolism of galactose. Catalyzes the conversion of UDP-galactose (UDP-Gal) to UDP-glucose (UDP-Glc) through a mechanism involving the transient reduction of NAD. This is UDP-glucose 4-epimerase (galE) from Yersinia enterocolitica.